Consider the following 314-residue polypeptide: BTB/POZ domain-containing protein KCTD17 (314 aa).

Positions 24 to 94 (KWVRLNVGGT…LRHGKLVLDK (71 aa)) constitute a BTB domain. The segment at 190–268 (STPNGLSSES…PAGGSRPHPL (79 aa)) is disordered. Positions 196–239 (SSESSRKTKSTEEQLEEQQQQEEEVEEVEVEQVQVEADAQEKAQ) form a coiled coil. The span at 208-225 (EQLEEQQQQEEEVEEVEV) shows a compositional bias: acidic residues.

In terms of assembly, homopentamer; forms a closed pentamer. Interacts with CUL3; interaction is direct and forms a 5:5 heterodecamer. Interacts with TCHP. Interacts with CUL3, as part of the BCR(KCTD17) E3 ubiquitin ligase complex, at least composed of CUL3, KCTD17 and RBX1. Highly expressed in brain. Highest expression is observed in the putamen and the thalamus.

It localises to the cytoplasm. Functionally, substrate-adapter for CUL3-RING ubiquitin ligase complexes which mediates the ubiquitination and subsequent proteasomal degradation of TCHP, a protein involved in ciliogenesis down-regulation. Thereby, positively regulates ciliogenesis, playing a crucial role in the initial steps of axoneme extension. May also play a role in endoplasmic reticulum calcium ion homeostasis. The protein is BTB/POZ domain-containing protein KCTD17 of Homo sapiens (Human).